Consider the following 257-residue polypeptide: GTP cyclohydrolase III (257 aa).

This sequence belongs to the archaeal-type GTP cyclohydrolase family.

The enzyme catalyses GTP + 3 H2O = 2-amino-5-formylamino-6-(5-phospho-D-ribosylamino)pyrimidin-4(3H)-one + 2 phosphate + 2 H(+). Functionally, catalyzes the formation of 2-amino-5-formylamino-6-ribofuranosylamino-4(3H)-pyrimidinone ribonucleotide monophosphate and inorganic phosphate from GTP. Also has an independent pyrophosphate phosphohydrolase activity. This is GTP cyclohydrolase III from Halorubrum lacusprofundi (strain ATCC 49239 / DSM 5036 / JCM 8891 / ACAM 34).